A 99-amino-acid chain; its full sequence is Small integral membrane protein 14 (99 aa).

Over 1–49 (MAEGGFDPCECVCSHEHAMRRLINLLRQSQSYCTDTECLQELPGPSGDN) the chain is Lumenal. Residues 50–70 (GISVTMILVAWMVIALILFLL) traverse the membrane as a helical segment. Topologically, residues 71–99 (RPPNLRGSSLPGKPTSPHNGQDPPAPPVD) are cytoplasmic. A disordered region spans residues 78–99 (SSLPGKPTSPHNGQDPPAPPVD).

It localises to the endoplasmic reticulum membrane. This Homo sapiens (Human) protein is Small integral membrane protein 14 (SMIM14).